Reading from the N-terminus, the 459-residue chain is Bifunctional protein GlmU (459 aa).

Residues 1 to 230 (MTTRNTIILA…FDESMGVNDR (230 aa)) are pyrophosphorylase. UDP-N-acetyl-alpha-D-glucosamine-binding positions include 9–12 (LAAG), K23, Q73, 78–79 (GT), 101–103 (SGD), G140, E155, N170, and N228. D103 serves as a coordination point for Mg(2+). Residue N228 participates in Mg(2+) binding. The segment at 231–251 (VALSAATKIMRDRINEAHMRD) is linker. The tract at residues 252 to 459 (GVTLIDPATT…YQKLPYRGED (208 aa)) is N-acetyltransferase. The UDP-N-acetyl-alpha-D-glucosamine site is built by R333 and K351. H363 serves as the catalytic Proton acceptor. Residues Y366 and N377 each coordinate UDP-N-acetyl-alpha-D-glucosamine. Residues 386–387 (NY), S405, A423, and R440 contribute to the acetyl-CoA site.

It in the N-terminal section; belongs to the N-acetylglucosamine-1-phosphate uridyltransferase family. This sequence in the C-terminal section; belongs to the transferase hexapeptide repeat family. Homotrimer. Requires Mg(2+) as cofactor.

Its subcellular location is the cytoplasm. It catalyses the reaction alpha-D-glucosamine 1-phosphate + acetyl-CoA = N-acetyl-alpha-D-glucosamine 1-phosphate + CoA + H(+). The catalysed reaction is N-acetyl-alpha-D-glucosamine 1-phosphate + UTP + H(+) = UDP-N-acetyl-alpha-D-glucosamine + diphosphate. Its pathway is nucleotide-sugar biosynthesis; UDP-N-acetyl-alpha-D-glucosamine biosynthesis; N-acetyl-alpha-D-glucosamine 1-phosphate from alpha-D-glucosamine 6-phosphate (route II): step 2/2. It participates in nucleotide-sugar biosynthesis; UDP-N-acetyl-alpha-D-glucosamine biosynthesis; UDP-N-acetyl-alpha-D-glucosamine from N-acetyl-alpha-D-glucosamine 1-phosphate: step 1/1. It functions in the pathway bacterial outer membrane biogenesis; LPS lipid A biosynthesis. Functionally, catalyzes the last two sequential reactions in the de novo biosynthetic pathway for UDP-N-acetylglucosamine (UDP-GlcNAc). The C-terminal domain catalyzes the transfer of acetyl group from acetyl coenzyme A to glucosamine-1-phosphate (GlcN-1-P) to produce N-acetylglucosamine-1-phosphate (GlcNAc-1-P), which is converted into UDP-GlcNAc by the transfer of uridine 5-monophosphate (from uridine 5-triphosphate), a reaction catalyzed by the N-terminal domain. This is Bifunctional protein GlmU from Levilactobacillus brevis (strain ATCC 367 / BCRC 12310 / CIP 105137 / JCM 1170 / LMG 11437 / NCIMB 947 / NCTC 947) (Lactobacillus brevis).